The primary structure comprises 245 residues: Phosducin (245 aa).

The segment at 1–67 is disordered; sequence MEEARRQSLE…SRDDKDSKER (67 aa). A Phosducin domain is found at 1–241; the sequence is MEEARRQSLE…IHALEQTSME (241 aa). Basic and acidic residues predominate over residues 58-67; sequence SRDDKDSKER. Position 73 is a phosphoserine; by PKA (S73). Residues 111–245 form a thioredoxin fold region; the sequence is YGFVYELETG…EQTSMEEDVE (135 aa).

Belongs to the phosducin family. As to quaternary structure, forms a complex with the beta and gamma subunits of the GTP-binding protein, transducin. Interacts with CRX. In terms of processing, light-induced changes in cyclic nucleotide levels modulate the phosphorylation of this protein by cAMP kinase.

The protein localises to the cytoplasm. The protein resides in the cytosol. It localises to the nucleus. It is found in the cell projection. Its subcellular location is the cilium. The protein localises to the photoreceptor outer segment. The protein resides in the photoreceptor inner segment. Its function is as follows. May participate in the regulation of visual phototransduction or in the integration of photoreceptor metabolism. Inhibits the transcriptional activation activity of the cone-rod homeobox CRX. The polypeptide is Phosducin (PDC) (Equus caballus (Horse)).